The following is a 65-amino-acid chain: Weak toxin CM-11 (65 aa).

Disulfide bonds link C3–C24, C6–C11, C17–C42, C46–C57, and C58–C63.

The protein belongs to the three-finger toxin family. Ancestral subfamily. Orphan group II sub-subfamily. Expressed by the venom gland.

It localises to the secreted. Its function is as follows. Binds with low affinity to muscular (alpha-1-beta-1-delta-epsilon/CHRNA1-CHRNB1-CHRND-CHRNE) and very low affinity to neuronal (alpha-7/CHRNA7) nicotinic acetylcholine receptor (nAChR). This chain is Weak toxin CM-11, found in Naja haje haje (Egyptian cobra).